A 521-amino-acid polypeptide reads, in one-letter code: Zinc finger and BTB domain-containing protein 18 (521 aa).

Residues 24 to 91 form the BTB domain; sequence CDCTVLVGDA…MYEGKLQFKD (68 aa). Residues 190 to 230 are disordered; the sequence is DSASIPQTGGEAETHTAAAGKTADSPCSSTGSLSHRSATSM. The segment covering 197 to 212 has biased composition (low complexity); sequence TGGEAETHTAAAGKTA. Over residues 214-230 the composition is skewed to polar residues; the sequence is SPCSSTGSLSHRSATSM. 4 C2H2-type zinc fingers span residues 369–391, 409–431, 437–459, and 465–488; these read FMCPLCNKVFPSPHILQIHLSTH, PTCSLCGKTFSCMYTLKRHERTH, FTCTQCGKSFQYSHNLSRHAVVH, and HACKWCERRFTQSGDLYRHIRKFH.

It belongs to the krueppel C2H2-type zinc-finger protein family. ZBTB18 subfamily.

Its subcellular location is the nucleus. Functionally, transcriptional repressor that plays a role in various developmental processes. Specifically binds the consensus DNA sequence 5'-[AC]ACATCTG[GT][AC]-3' which contains the E box core, and acts by recruiting chromatin remodeling multiprotein complexes. The protein is Zinc finger and BTB domain-containing protein 18 (zbtb18) of Xenopus tropicalis (Western clawed frog).